Reading from the N-terminus, the 509-residue chain is Sensor histidine kinase TrcS (509 aa).

The next 2 helical transmembrane spans lie at 24 to 44 (LLLG…VVSV) and 188 to 208 (VALV…VVGY). An HAMP domain is found at 207-269 (GYALRPLRRV…LLDNVDGALA (63 aa)). Positions 284 to 502 (DASHELRTPL…VFRVRLPMIE (219 aa)) constitute a Histidine kinase domain. His287 carries the post-translational modification Phosphohistidine; by autocatalysis.

A divalent metal cation is required as a cofactor. In terms of processing, autophosphorylated.

Its subcellular location is the cell membrane. The enzyme catalyses ATP + protein L-histidine = ADP + protein N-phospho-L-histidine.. Functionally, member of the two-component regulatory system TrcS/TrcR. Phosphorylates TrcR. The TrcR-TrcS regulatory system may act as a transition regulatory system involved in adapting to an intracellular environment and transitioning from latency to reactivation. The protein is Sensor histidine kinase TrcS of Mycobacterium tuberculosis (strain ATCC 25618 / H37Rv).